The primary structure comprises 468 residues: Probable ubiquitin carboxyl-terminal hydrolase R319 (468 aa).

Residues 42 to 462 enclose the USP domain; that stretch reads TGIMNLGNTC…NAYILFYIRS (421 aa). Residue Cys51 is the Nucleophile of the active site. Catalysis depends on His420, which acts as the Proton acceptor.

It belongs to the peptidase C19 family.

The enzyme catalyses Thiol-dependent hydrolysis of ester, thioester, amide, peptide and isopeptide bonds formed by the C-terminal Gly of ubiquitin (a 76-residue protein attached to proteins as an intracellular targeting signal).. The sequence is that of Probable ubiquitin carboxyl-terminal hydrolase R319 from Acanthamoeba polyphaga (Amoeba).